The primary structure comprises 172 residues: MSDQQQANQQDDQPFFNIQRVYLKDMSLEQPNSPGIFLESEAPSVEVQVNVGASQLQEGIFEVVVTGTVTTKVQDKVAFLVEAHQAGIFDIRNVPVEQLDPLLGIACPTILYPYLRGNIADVITRAGFQAIHLSEINFQALYEQRLQAAMEEAQGQGGDSGIVMPDGSQARH.

The segment at Ala-153 to His-172 is disordered.

It belongs to the SecB family. As to quaternary structure, homotetramer, a dimer of dimers. One homotetramer interacts with 1 SecA dimer.

It is found in the cytoplasm. Its function is as follows. One of the proteins required for the normal export of preproteins out of the cell cytoplasm. It is a molecular chaperone that binds to a subset of precursor proteins, maintaining them in a translocation-competent state. It also specifically binds to its receptor SecA. The chain is Protein-export protein SecB from Cupriavidus metallidurans (strain ATCC 43123 / DSM 2839 / NBRC 102507 / CH34) (Ralstonia metallidurans).